Reading from the N-terminus, the 375-residue chain is Tyrosine--tRNA ligase (375 aa).

L-tyrosine contacts are provided by Tyr-37, Tyr-168, Gln-172, Asp-175, and Gln-190. The short motif at 251–255 is the 'KMSKS' region element; sequence KMSKS. Lys-254 contacts ATP.

It belongs to the class-I aminoacyl-tRNA synthetase family. TyrS type 4 subfamily. As to quaternary structure, homodimer.

It is found in the cytoplasm. It carries out the reaction tRNA(Tyr) + L-tyrosine + ATP = L-tyrosyl-tRNA(Tyr) + AMP + diphosphate + H(+). Its function is as follows. Catalyzes the attachment of tyrosine to tRNA(Tyr) in a two-step reaction: tyrosine is first activated by ATP to form Tyr-AMP and then transferred to the acceptor end of tRNA(Tyr). The polypeptide is Tyrosine--tRNA ligase (Thermococcus onnurineus (strain NA1)).